Here is a 334-residue protein sequence, read N- to C-terminus: Glyceraldehyde-3-phosphate dehydrogenase (334 aa).

Residues 12–13 (TI) and G111 contribute to the NAD(+) site. 140 to 142 (SCN) is a binding site for D-glyceraldehyde 3-phosphate. C141 acts as the Nucleophile in catalysis. R167 serves as a coordination point for NAD(+). Position 192–193 (192–193 (HG)) interacts with D-glyceraldehyde 3-phosphate. Q298 is a binding site for NAD(+).

This sequence belongs to the glyceraldehyde-3-phosphate dehydrogenase family. In terms of assembly, homotetramer.

The protein localises to the encapsulin nanocompartment. It carries out the reaction D-glyceraldehyde 3-phosphate + phosphate + NADP(+) = (2R)-3-phospho-glyceroyl phosphate + NADPH + H(+). The catalysed reaction is D-glyceraldehyde 3-phosphate + phosphate + NAD(+) = (2R)-3-phospho-glyceroyl phosphate + NADH + H(+). It functions in the pathway carbohydrate degradation; glycolysis; pyruvate from D-glyceraldehyde 3-phosphate: step 1/5. In terms of biological role, possible cargo protein of a type 4B encapsulin nanocompartment. Active in the presence of NAD and NADP, prefers NADP. This chain is Glyceraldehyde-3-phosphate dehydrogenase (gap), found in Pyrococcus furiosus (strain ATCC 43587 / DSM 3638 / JCM 8422 / Vc1).